The following is a 260-amino-acid chain: Ubiquinone/menaquinone biosynthesis C-methyltransferase UbiE (260 aa).

S-adenosyl-L-methionine contacts are provided by residues Thr83, Asp104, and 132–133 (NA).

It belongs to the class I-like SAM-binding methyltransferase superfamily. MenG/UbiE family.

It catalyses the reaction a 2-demethylmenaquinol + S-adenosyl-L-methionine = a menaquinol + S-adenosyl-L-homocysteine + H(+). The enzyme catalyses a 2-methoxy-6-(all-trans-polyprenyl)benzene-1,4-diol + S-adenosyl-L-methionine = a 5-methoxy-2-methyl-3-(all-trans-polyprenyl)benzene-1,4-diol + S-adenosyl-L-homocysteine + H(+). It participates in quinol/quinone metabolism; menaquinone biosynthesis; menaquinol from 1,4-dihydroxy-2-naphthoate: step 2/2. The protein operates within cofactor biosynthesis; ubiquinone biosynthesis. Its function is as follows. Methyltransferase required for the conversion of demethylmenaquinol (DMKH2) to menaquinol (MKH2) and the conversion of 2-polyprenyl-6-methoxy-1,4-benzoquinol (DDMQH2) to 2-polyprenyl-3-methyl-6-methoxy-1,4-benzoquinol (DMQH2). This is Ubiquinone/menaquinone biosynthesis C-methyltransferase UbiE from Bartonella bacilliformis (strain ATCC 35685 / KC583 / Herrer 020/F12,63).